A 321-amino-acid chain; its full sequence is UDP-N-acetylenolpyruvoylglucosamine reductase (321 aa).

In terms of domain architecture, FAD-binding PCMH-type spans 39–205 (RTGGLAELFY…TAALLEGEPG (167 aa)). Residue R185 is part of the active site. Residue S234 is the Proton donor of the active site. Residue E304 is part of the active site.

Belongs to the MurB family. Requires FAD as cofactor.

The protein resides in the cytoplasm. It carries out the reaction UDP-N-acetyl-alpha-D-muramate + NADP(+) = UDP-N-acetyl-3-O-(1-carboxyvinyl)-alpha-D-glucosamine + NADPH + H(+). The protein operates within cell wall biogenesis; peptidoglycan biosynthesis. Its function is as follows. Cell wall formation. The polypeptide is UDP-N-acetylenolpyruvoylglucosamine reductase (Bartonella quintana (strain Toulouse) (Rochalimaea quintana)).